Here is a 950-residue protein sequence, read N- to C-terminus: Protocadherin alpha-6 (950 aa).

The first 29 residues, M1–G29, serve as a signal peptide directing secretion. Residues Q30–N697 lie on the Extracellular side of the membrane. 6 Cadherin domains span residues S34 to F133, A157 to F242, E243 to I350, A351 to F455, A456 to L565, and V581 to A678. 4 N-linked (GlcNAc...) asparagine glycosylation sites follow: N257, N265, N386, and N548. Residues V698–Y718 traverse the membrane as a helical segment. The Cytoplasmic portion of the chain corresponds to T719–Q950. PXXP repeat units lie at residues P799 to P802, P832 to P835, P873 to P876, and P891 to P894. The interval P799–P894 is 4 X 4 AA repeats of P-X-X-P. The segment at A830 to Q950 is disordered. Over residues D909–K923 the composition is skewed to basic and acidic residues.

It localises to the cell membrane. It is found in the secreted. In terms of biological role, potential calcium-dependent cell-adhesion protein. May be involved in the establishment and maintenance of specific neuronal connections in the brain. This Homo sapiens (Human) protein is Protocadherin alpha-6 (PCDHA6).